The chain runs to 256 residues: DNA repair protein RecO (256 aa).

This sequence belongs to the RecO family.

Involved in DNA repair and RecF pathway recombination. This Thiobacillus denitrificans (strain ATCC 25259 / T1) protein is DNA repair protein RecO.